The sequence spans 229 residues: ATP-dependent dethiobiotin synthetase BioD (229 aa).

Residue 12–17 (GVGKTV) coordinates ATP. Threonine 16 is a Mg(2+) binding site. Lysine 37 is a catalytic residue. Residue threonine 41 coordinates substrate. ATP-binding positions include aspartate 53, 112–115 (EGAG), and 201–203 (PAG). Residues aspartate 53 and glutamate 112 each contribute to the Mg(2+) site.

The protein belongs to the dethiobiotin synthetase family. As to quaternary structure, homodimer. The cofactor is Mg(2+).

It is found in the cytoplasm. It catalyses the reaction (7R,8S)-7,8-diammoniononanoate + CO2 + ATP = (4R,5S)-dethiobiotin + ADP + phosphate + 3 H(+). Its pathway is cofactor biosynthesis; biotin biosynthesis; biotin from 7,8-diaminononanoate: step 1/2. Catalyzes a mechanistically unusual reaction, the ATP-dependent insertion of CO2 between the N7 and N8 nitrogen atoms of 7,8-diaminopelargonic acid (DAPA, also called 7,8-diammoniononanoate) to form a ureido ring. The sequence is that of ATP-dependent dethiobiotin synthetase BioD from Mycobacterium sp. (strain KMS).